Here is a 95-residue protein sequence, read N- to C-terminus: UPF0132 membrane protein AF_0736 (95 aa).

3 consecutive transmembrane segments (helical) span residues cysteine 2–valine 22, threonine 32–leucine 52, and valine 55–glutamate 75.

It belongs to the UPF0132 family.

The protein localises to the cell membrane. This is UPF0132 membrane protein AF_0736 from Archaeoglobus fulgidus (strain ATCC 49558 / DSM 4304 / JCM 9628 / NBRC 100126 / VC-16).